A 323-amino-acid chain; its full sequence is Mitochondrial glutamate carrier 1 (323 aa).

Solcar repeat units follow at residues 6–93 (ISLP…FRHQ), 101–214 (LTLP…LNQL), and 223–312 (SPFY…GIAE). The next 6 helical transmembrane spans lie at 12-32 (LING…IDLA), 62-82 (YFGM…EKAI), 107-127 (MLAG…MEML), 189-209 (GLGA…PLFA), 223-243 (SPFY…AVAV), and 292-312 (ALVI…GIAE).

Belongs to the mitochondrial carrier (TC 2.A.29) family.

Its subcellular location is the mitochondrion inner membrane. The enzyme catalyses L-glutamate(in) + H(+)(in) = L-glutamate(out) + H(+)(out). Mitochondrial glutamate/H(+) symporter. Responsible for the transport of glutamate from the cytosol into the mitochondrial matrix with the concomitant import of a proton. Plays a role in the control of glucose-stimulated insulin secretion. The sequence is that of Mitochondrial glutamate carrier 1 (Slc25a22) from Mus musculus (Mouse).